We begin with the raw amino-acid sequence, 598 residues long: Elongation factor 4 (598 aa).

A tr-type G domain is found at 5-187 (ANIRNFSIIA…ALVEFIPAPT (183 aa)). GTP contacts are provided by residues 17 to 22 (DHGKST) and 134 to 137 (NKID).

Belongs to the TRAFAC class translation factor GTPase superfamily. Classic translation factor GTPase family. LepA subfamily.

It is found in the cell inner membrane. It catalyses the reaction GTP + H2O = GDP + phosphate + H(+). In terms of biological role, required for accurate and efficient protein synthesis under certain stress conditions. May act as a fidelity factor of the translation reaction, by catalyzing a one-codon backward translocation of tRNAs on improperly translocated ribosomes. Back-translocation proceeds from a post-translocation (POST) complex to a pre-translocation (PRE) complex, thus giving elongation factor G a second chance to translocate the tRNAs correctly. Binds to ribosomes in a GTP-dependent manner. The protein is Elongation factor 4 of Psychrobacter arcticus (strain DSM 17307 / VKM B-2377 / 273-4).